Consider the following 363-residue polypeptide: NAD(P)H-quinone oxidoreductase subunit 1, chloroplastic (363 aa).

The next 8 membrane-spanning stretches (helical) occupy residues 30–50, 98–118, 127–147, 165–185, 203–223, 248–268, 300–320, and 336–356; these read LFPI…IVWL, FSIG…VIPF, LSIG…GLLM, AAQS…ISLL, FWGW…ISSL, YSGI…LVSS, VFGT…FLFI, and LLNL…LLTT.

The protein belongs to the complex I subunit 1 family. NDH is composed of at least 16 different subunits, 5 of which are encoded in the nucleus.

It localises to the plastid. The protein localises to the chloroplast thylakoid membrane. It catalyses the reaction a plastoquinone + NADH + (n+1) H(+)(in) = a plastoquinol + NAD(+) + n H(+)(out). It carries out the reaction a plastoquinone + NADPH + (n+1) H(+)(in) = a plastoquinol + NADP(+) + n H(+)(out). In terms of biological role, NDH shuttles electrons from NAD(P)H:plastoquinone, via FMN and iron-sulfur (Fe-S) centers, to quinones in the photosynthetic chain and possibly in a chloroplast respiratory chain. The immediate electron acceptor for the enzyme in this species is believed to be plastoquinone. Couples the redox reaction to proton translocation, and thus conserves the redox energy in a proton gradient. The protein is NAD(P)H-quinone oxidoreductase subunit 1, chloroplastic of Nicotiana tomentosiformis (Tobacco).